The chain runs to 338 residues: NADPH dehydrogenase (338 aa).

FMN is bound at residue 22 to 25 (SPMC). A substrate-binding site is contributed by Y27. Positions 59 and 101 each coordinate FMN. 163 to 166 (HAAH) contacts substrate. Residues R214 and 306–307 (GR) each bind FMN.

This sequence belongs to the NADH:flavin oxidoreductase/NADH oxidase family. NamA subfamily. As to quaternary structure, homotetramer. The cofactor is FMN.

It carries out the reaction A + NADPH + H(+) = AH2 + NADP(+). In terms of biological role, catalyzes the reduction of the double bond of an array of alpha,beta-unsaturated aldehydes and ketones. It also reduces the nitro group of nitroester and nitroaromatic compounds. It could have a role in detoxification processes. The polypeptide is NADPH dehydrogenase (Listeria welshimeri serovar 6b (strain ATCC 35897 / DSM 20650 / CCUG 15529 / CIP 8149 / NCTC 11857 / SLCC 5334 / V8)).